The following is a 260-amino-acid chain: Homeobox protein Hox-D11b (260 aa).

Positions 1 to 14 (MFSSSFSYPSKTSP) are enriched in low complexity. Disordered stretches follow at residues 1-21 (MFSS…PFLA) and 151-206 (ITPG…CTRR). Positions 167 to 179 (RSPDGESSEERAG) are enriched in basic and acidic residues. The homeobox; truncated DNA-binding region spans 205–260 (RRKKRCPYSKQQIIELEREFLFNIYINKDRRMQLSHLLRLTDRCVNNPLNQDSFFT).

This sequence belongs to the Abd-B homeobox family.

Its subcellular location is the nucleus. Sequence-specific transcription factor which is part of a developmental regulatory system that provides cells with specific positional identities on the anterior-posterior axis. The sequence is that of Homeobox protein Hox-D11b (hoxd11b) from Takifugu rubripes (Japanese pufferfish).